The following is a 427-amino-acid chain: 3-phosphoshikimate 1-carboxyvinyltransferase (427 aa).

3-phosphoshikimate is bound by residues Lys22, Ser23, and Arg27. Lys22 contributes to the phosphoenolpyruvate binding site. 2 residues coordinate phosphoenolpyruvate: Gly96 and Arg124. Positions 169, 170, 171, 197, 313, 336, and 340 each coordinate 3-phosphoshikimate. Residue Gln171 participates in phosphoenolpyruvate binding. Catalysis depends on Asp313, which acts as the Proton acceptor. The phosphoenolpyruvate site is built by Arg344, Arg386, and Lys411.

This sequence belongs to the EPSP synthase family. As to quaternary structure, monomer.

The protein localises to the cytoplasm. It catalyses the reaction 3-phosphoshikimate + phosphoenolpyruvate = 5-O-(1-carboxyvinyl)-3-phosphoshikimate + phosphate. It participates in metabolic intermediate biosynthesis; chorismate biosynthesis; chorismate from D-erythrose 4-phosphate and phosphoenolpyruvate: step 6/7. Its function is as follows. Catalyzes the transfer of the enolpyruvyl moiety of phosphoenolpyruvate (PEP) to the 5-hydroxyl of shikimate-3-phosphate (S3P) to produce enolpyruvyl shikimate-3-phosphate and inorganic phosphate. The protein is 3-phosphoshikimate 1-carboxyvinyltransferase of Salmonella paratyphi A (strain ATCC 9150 / SARB42).